The chain runs to 70 residues: DNA-directed RNA polymerase subunit omega (70 aa).

This sequence belongs to the RNA polymerase subunit omega family. In cyanobacteria the RNAP catalytic core is composed of 2 alpha, 1 beta, 1 beta', 1 gamma and 1 omega subunit. When a sigma factor is associated with the core the holoenzyme is formed, which can initiate transcription.

The catalysed reaction is RNA(n) + a ribonucleoside 5'-triphosphate = RNA(n+1) + diphosphate. Its function is as follows. Promotes RNA polymerase assembly. Latches the N- and C-terminal regions of the beta' subunit thereby facilitating its interaction with the beta and alpha subunits. In Prochlorococcus marinus (strain NATL1A), this protein is DNA-directed RNA polymerase subunit omega.